The sequence spans 165 residues: Xanthine-guanine phosphoribosyltransferase (165 aa).

Residues 41–42 and 98–106 each bind 5-phospho-alpha-D-ribose 1-diphosphate; these read RG and DDLTDTGKT. D99 is a binding site for Mg(2+). Guanine-binding residues include D102 and I145. 2 residues coordinate xanthine: D102 and I145. GMP contacts are provided by residues 102–106 and 144–145; these read DTGKT and WI.

Belongs to the purine/pyrimidine phosphoribosyltransferase family. XGPT subfamily. In terms of assembly, homotetramer. It depends on Mg(2+) as a cofactor.

The protein localises to the cell inner membrane. The enzyme catalyses GMP + diphosphate = guanine + 5-phospho-alpha-D-ribose 1-diphosphate. It catalyses the reaction XMP + diphosphate = xanthine + 5-phospho-alpha-D-ribose 1-diphosphate. The catalysed reaction is IMP + diphosphate = hypoxanthine + 5-phospho-alpha-D-ribose 1-diphosphate. The protein operates within purine metabolism; GMP biosynthesis via salvage pathway; GMP from guanine: step 1/1. It functions in the pathway purine metabolism; XMP biosynthesis via salvage pathway; XMP from xanthine: step 1/1. Functionally, purine salvage pathway enzyme that catalyzes the transfer of the ribosyl-5-phosphate group from 5-phospho-alpha-D-ribose 1-diphosphate (PRPP) to the N9 position of the 6-oxopurines guanine and xanthine to form the corresponding ribonucleotides GMP (guanosine 5'-monophosphate) and XMP (xanthosine 5'-monophosphate), with the release of PPi. To a lesser extent, also acts on hypoxanthine. The chain is Xanthine-guanine phosphoribosyltransferase from Brucella anthropi (strain ATCC 49188 / DSM 6882 / CCUG 24695 / JCM 21032 / LMG 3331 / NBRC 15819 / NCTC 12168 / Alc 37) (Ochrobactrum anthropi).